We begin with the raw amino-acid sequence, 447 residues long: MIKIKKGLDLPIAGAPVQTIQDGPAIHHVALLGEEYVGMRPSMLVQEGDQVKKGQALFEDKKNPGVLFTAPASGKISAINRGERRVLQSVVIEVEGDEQIPFEHYAAEELNQLSDEQVQHHLLTSGLWTALRTRPFSKTPVPGSRPRAIFISAMDTQPLAADPQVIIATESEAFNHGLTVLTRLTDGKVHVCHAAGQAVTRHTNTQVTYNEFSGPHPAGLVGTHIHFLEPVSQTKMVWHVGYQDVIAIGKLFTRGELCTDRIVALAGPQVNQPILLRTRLGASLSGLTAGKLKEGDNRIISGSVLSGTAFSATHGYLGRFHQQVSVIREGREKELFGWVMPGRDKYSITRTTLGHFFKRKLFAFSTDMHGGERAMVPIGNYERVMPLDILATHLLRDLLAGDTDSAQALGCLELDEEDLALCTFVCPGKYEYGPVLRDILTQIEQEG.

It belongs to the NqrA family. Composed of six subunits; NqrA, NqrB, NqrC, NqrD, NqrE and NqrF.

The catalysed reaction is a ubiquinone + n Na(+)(in) + NADH + H(+) = a ubiquinol + n Na(+)(out) + NAD(+). NQR complex catalyzes the reduction of ubiquinone-1 to ubiquinol by two successive reactions, coupled with the transport of Na(+) ions from the cytoplasm to the periplasm. NqrA to NqrE are probably involved in the second step, the conversion of ubisemiquinone to ubiquinol. The polypeptide is Na(+)-translocating NADH-quinone reductase subunit A (Yersinia pseudotuberculosis serotype O:1b (strain IP 31758)).